The primary structure comprises 293 residues: Small ribosomal subunit protein uS5 (293 aa).

The tract at residues Met1–Glu56 is disordered. Ala2 bears the N-acetylalanine mark. The span at Ala7–Arg34 shows a compositional bias: gly residues. Basic residues predominate over residues Gly35–Arg51. Residues Lys54 and Lys58 each participate in a glycyl lysine isopeptide (Lys-Gly) (interchain with G-Cter in ubiquitin) cross-link. The S5 DRBM domain occupies Leu102 to Val165. Position 252 is a phosphothreonine (Thr252). Position 263 is an N6-acetyllysine (Lys263). A Phosphoserine modification is found at Ser264. Residue Thr270 is modified to Phosphothreonine. Lys275 is modified (N6-acetyllysine; alternate). A Glycyl lysine isopeptide (Lys-Gly) (interchain with G-Cter in SUMO1); alternate cross-link involves residue Lys275. A Glycyl lysine isopeptide (Lys-Gly) (interchain with G-Cter in SUMO2); alternate cross-link involves residue Lys275. Lys275 participates in a covalent cross-link: Glycyl lysine isopeptide (Lys-Gly) (interchain with G-Cter in ubiquitin); alternate. A Phosphoserine modification is found at Ser281.

This sequence belongs to the universal ribosomal protein uS5 family. Component of the small ribosomal subunit. Interacts with zinc finger protein ZNF277 (via zinc-finger domains); the interaction is direct; the interaction is extra-ribosomal. Interaction with ZNF277 competes with the binding of RPS2 to protein arginine methyltransferase PRMT3. Citrullinated by PADI4 in the Arg/Gly-rich region. In terms of processing, asymmetric arginine dimethylation by PRMT3 occurs at multiple sites in the Arg/Gly-rich region. Post-translationally, monoubiquitinated at Lys-54 and Lys-58 by RNF10 when a ribosome has stalled during translation, leading to its degradation by the proteasome. Deubiquitinated at Lys-54 and Lys-58 by USP10, preventing degradation by the proteasome and promoting 40S ribosome subunit recycling following ribosome dissociation.

The protein resides in the cytoplasm. It localises to the nucleus. It is found in the nucleolus. Its function is as follows. Component of the ribosome, a large ribonucleoprotein complex responsible for the synthesis of proteins in the cell. The small ribosomal subunit (SSU) binds messenger RNAs (mRNAs) and translates the encoded message by selecting cognate aminoacyl-transfer RNA (tRNA) molecules. The large subunit (LSU) contains the ribosomal catalytic site termed the peptidyl transferase center (PTC), which catalyzes the formation of peptide bonds, thereby polymerizing the amino acids delivered by tRNAs into a polypeptide chain. The nascent polypeptides leave the ribosome through a tunnel in the LSU and interact with protein factors that function in enzymatic processing, targeting, and the membrane insertion of nascent chains at the exit of the ribosomal tunnel. Plays a role in the assembly and function of the 40S ribosomal subunit. Mutations in this protein affects the control of translational fidelity. Involved in nucleolar processing of pre-18S ribosomal RNA and ribosome assembly. This chain is Small ribosomal subunit protein uS5 (RPS2), found in Homo sapiens (Human).